Consider the following 1390-residue polypeptide: DNA-directed RNA polymerase III subunit RPC1 (1390 aa).

Positions 69, 72, 79, 82, 109, and 112 each coordinate Zn(2+). A DNA-binding site is contributed by Lys-144. The Zn(2+) site is built by Cys-156 and Cys-159. 6 residues coordinate DNA: Lys-167, Ser-326, Lys-348, Arg-353, Arg-360, and Arg-366. Lys-445 carries the post-translational modification N6-acetyllysine. Arg-464 provides a ligand contact to RNA. Mg(2+) contacts are provided by Asp-499, Asp-501, and Asp-503. An RNA-binding site is contributed by Asp-503. The interval 844–856 (PTEFFFHTMAGRE) is bridging helix. The DNA site is built by Arg-1159, Arg-1305, and Lys-1323.

It belongs to the RNA polymerase beta' chain family. Component of the RNA polymerase III (Pol III) complex consisting of 17 subunits: a ten-subunit catalytic core composed of POLR3A/RPC1, POLR3B/RPC2, POLR1C/RPAC1, POLR1D/RPAC2, POLR3K/RPC10, POLR2E/RPABC1, POLR2F/RPABC2, POLR2H/RPABC3, POLR2K/RPABC4 and POLR2L/RPABC5; a mobile stalk composed of two subunits POLR3H/RPC8 and CRCP/RPC9, protruding from the core and functioning primarily in transcription initiation; and additional subunits homologous to general transcription factors of the RNA polymerase II machinery, POLR3C/RPC3-POLR3F/RPC6-POLR3G/RPC7 heterotrimer required for transcription initiation and POLR3D/RPC4-POLR3E/RPC5 heterodimer involved in both transcription initiation and termination. As part of the RNA polymerase III complex, interacts with PKP2. The cofactor is Mg(2+).

The protein localises to the nucleus. The protein resides in the cytoplasm. Its subcellular location is the cytosol. The enzyme catalyses RNA(n) + a ribonucleoside 5'-triphosphate = RNA(n+1) + diphosphate. Catalytic core component of RNA polymerase III (Pol III), a DNA-dependent RNA polymerase which synthesizes small non-coding RNAs using the four ribonucleoside triphosphates as substrates. Synthesizes 5S rRNA, snRNAs, tRNAs and miRNAs from at least 500 distinct genomic loci. Pol III-mediated transcription cycle proceeds through transcription initiation, transcription elongation and transcription termination stages. During transcription initiation, Pol III is recruited to DNA promoters type I, II or III with the help of general transcription factors and other specific initiation factors. Once the polymerase has escaped from the promoter it enters the elongation phase during which RNA is actively polymerized, based on complementarity with the template DNA strand. Transcription termination involves the release of the RNA transcript and polymerase from the DNA. Forms Pol III active center together with the second largest subunit POLR3B/RPC2. Appends one nucleotide at a time to the 3' end of the nascent RNA, with POLR3A/RPC1 contributing a Mg(2+)-coordinating DxDGD motif, and POLR3B/RPC2 participating in the coordination of a second Mg(2+) ion and providing lysine residues believed to facilitate Watson-Crick base pairing between the incoming nucleotide and template base. Typically, Mg(2+) ions direct a 5' nucleoside triphosphate to form a phosphodiester bond with the 3' hydroxyl of the preceding nucleotide of the nascent RNA, with the elimination of pyrophosphate. Pol III plays a key role in sensing and limiting infection by intracellular bacteria and DNA viruses. Acts as a nuclear and cytosolic DNA sensor involved in innate immune response. Can sense non-self dsDNA that serves as template for transcription into dsRNA. The non-self RNA polymerase III transcripts, such as Epstein-Barr virus-encoded RNAs (EBERs) induce type I interferon and NF-kappa-B through the RIG-I pathway. In Bos taurus (Bovine), this protein is DNA-directed RNA polymerase III subunit RPC1.